The primary structure comprises 95 residues: CRISPR-associated endoribonuclease Cas2 1 (95 aa).

A Mg(2+)-binding site is contributed by D11.

Belongs to the CRISPR-associated endoribonuclease Cas2 protein family. Homodimer, forms a heterotetramer with a Cas1 homodimer. It depends on Mg(2+) as a cofactor.

Its function is as follows. CRISPR (clustered regularly interspaced short palindromic repeat), is an adaptive immune system that provides protection against mobile genetic elements (viruses, transposable elements and conjugative plasmids). CRISPR clusters contain sequences complementary to antecedent mobile elements and target invading nucleic acids. CRISPR clusters are transcribed and processed into CRISPR RNA (crRNA). Functions as a ssRNA-specific endoribonuclease. Involved in the integration of spacer DNA into the CRISPR cassette. The protein is CRISPR-associated endoribonuclease Cas2 1 of Methanospirillum hungatei JF-1 (strain ATCC 27890 / DSM 864 / NBRC 100397 / JF-1).